A 207-amino-acid polypeptide reads, in one-letter code: Fibroblast growth factor 18 (207 aa).

An N-terminal signal peptide occupies residues 1 to 27; the sequence is MYSAPSTCTCLCLHFLLLCFQVQVLAA. Asn-39 carries an N-linked (GlcNAc...) asparagine glycan. A disulfide bond links Cys-109 and Cys-127. N-linked (GlcNAc...) asparagine glycosylation occurs at Asn-137.

The protein belongs to the heparin-binding growth factors family. Interacts with FGFR3 and FGFR4.

It is found in the secreted. In terms of biological role, plays an important role in the regulation of cell proliferation, cell differentiation and cell migration. Required for normal ossification and bone development. Stimulates hepatic and intestinal proliferation. In Bos taurus (Bovine), this protein is Fibroblast growth factor 18 (FGF18).